The sequence spans 160 residues: Serine-protein kinase RsbW (160 aa).

The protein belongs to the anti-sigma-factor family.

It catalyses the reaction L-seryl-[protein] + ATP = O-phospho-L-seryl-[protein] + ADP + H(+). It carries out the reaction L-threonyl-[protein] + ATP = O-phospho-L-threonyl-[protein] + ADP + H(+). In terms of biological role, negative regulator of sigma-B activity. Phosphorylates and inactivates its specific antagonist protein, RsbV. Upon phosphorylation of RsbV, RsbW is released and binds to sigma-B, thereby blocking its ability to form an RNA polymerase holoenzyme (E-sigma-B). This is Serine-protein kinase RsbW from Bacillus cereus (strain G9842).